Consider the following 643-residue polypeptide: MSNMDFLPISKEDLKKRNIDVLDFIIVTGDAYVDHPSFGTAIIGRVLEREGFTVGIIAQPNWNNIEDFKKLGKPKYGFLVNSGNIDSMVNHYTASKKKRHDDFYSPGGKSGYRPDRAVIVYCNKIKEAFKDSPIIIGGIEASLRRFAHYDYWDNSVRRSILEDSSADLLIYGMGEKPIVQVSNLLRYGMKIDSIKNVRGTTYIEKDIFSLKDYIEIPSFEEVSTNKKSYAEAYKIQYYEQDSIRGKTLVQKHKERYVVQNPPQPPLSQEEMDEVYALPYARTYHPMYEAEGGIPAIKEVKFSITSHRGCYGSCSFCALTFHQGRVIQNRSQDSILKEANMMTNMKDFKGYIHDVGGPTANFRHRACKVQEKHGTCKNKQCVFPKACKNLIVDHKEYLSLLRKIRKIPNVKKVFIRSGIRFDYLMYDKNDEFFKELCEHHISGQLKVAPEHISDKVLNLMGKPTRNVYDSFVKKYYDINKKIHKNQFLVPYLMSSHPGSDLKAAIELAQYIKKMGYTPEQVQDFYPTPGSLSTTMYYTGINPLTEEKVYIPKDQKEKRMQRALLQFSIHDNYDLVKEALIKAHREDLIGNGPDCLIPYNKPYKKSHKKNNAKNNNNHYNKNNNKNKDISKKNKKNSLSKHKKRK.

Residues 295–566 (AIKEVKFSIT…RMQRALLQFS (272 aa)) form the Radical SAM core domain. Residues C309, C313, and C316 each coordinate [4Fe-4S] cluster. Residues 598-643 (NKPYKKSHKKNNAKNNNNHYNKNNNKNKDISKKNKKNSLSKHKKRK) form a disordered region. Positions 600-609 (PYKKSHKKNN) are enriched in basic residues. Low complexity predominate over residues 610–621 (AKNNNNHYNKNN). Basic residues predominate over residues 630-643 (KNKKNSLSKHKKRK).

It belongs to the UPF0313 family. [4Fe-4S] cluster is required as a cofactor.

The chain is UPF0313 protein CLD_0573 from Clostridium botulinum (strain Okra / Type B1).